The following is a 390-amino-acid chain: NADH-quinone oxidoreductase subunit H (390 aa).

The next 9 helical transmembrane spans lie at 4–24, 78–98, 120–140, 157–177, 191–211, 247–266, 278–298, 315–337, and 341–360; these read WLLTLLITVVKAVAVILALLT, LVYTLAPIIAIGMALTAFGGI, VLALLALTSMGVYGIFLGGWA, MISYELGMGLSILGLLMLVGS, GWMILFQSLGFALFLISSFAE, YVNMITASALMSTLFFGGWR, IADIPILWLVVKIGFFLFVFI, FGWKLLLPLALFNTMLVAGYIAF, and WGWWPLALLSLLGLTALLAL.

This sequence belongs to the complex I subunit 1 family. NDH-1 is composed of 15 different subunits. Subunits NuoA, H, J, K, L, M, N constitute the membrane sector of the complex.

It localises to the cell membrane. It catalyses the reaction a quinone + NADH + 5 H(+)(in) = a quinol + NAD(+) + 4 H(+)(out). Its function is as follows. NDH-1 shuttles electrons from NADH, via FMN and iron-sulfur (Fe-S) centers, to quinones in the respiratory chain. The immediate electron acceptor for the enzyme in this species is believed to be ubiquinone. Couples the redox reaction to proton translocation (for every two electrons transferred, four hydrogen ions are translocated across the cytoplasmic membrane), and thus conserves the redox energy in a proton gradient. This subunit may bind ubiquinone. The sequence is that of NADH-quinone oxidoreductase subunit H from Deinococcus deserti (strain DSM 17065 / CIP 109153 / LMG 22923 / VCD115).